Consider the following 759-residue polypeptide: Cullin-4A (759 aa).

The interval 1–40 (MADEGPRKGSVSALMGRTNGLTKPAALAGGPAKPGGTGGS) is disordered. A Glycyl lysine isopeptide (Lys-Gly) (interchain with G-Cter in SUMO2) cross-link involves residue Lys8. At Ser10 the chain carries Phosphoserine. Residues 20–31 (GLTKPAALAGGP) are compositionally biased toward low complexity. Residue Lys33 forms a Glycyl lysine isopeptide (Lys-Gly) (interchain with G-Cter in ubiquitin) linkage. The Cullin neddylation domain maps to 691–750 (DRQYQIDAAIVRIMKMRKTLGHNLLVSELYNQLKFPVKPGDLKKRIESLIDRDYMERDKD). Lys705 is covalently cross-linked (Glycyl lysine isopeptide (Lys-Gly) (interchain with G-Cter in NEDD8)).

It belongs to the cullin family. In terms of assembly, can self-associate. Component of multiple DCX (DDB1-CUL4-X-box) E3 ubiquitin-protein ligase complexes that seem to consist of DDB1, CUL4A or CUL4B, RBX1 and a variable substrate recognition component which seems to belong to a protein family described as DCAF (Ddb1- and Cul4-associated factor) or CDW (CUL4-DDB1-associated WD40-repeat) proteins. Component of the CSA complex (DCX(ERCC8) complex) containing ERCC8, RBX1, DDB1 and CUL4A; the CSA complex interacts with RNA polymerase II; upon UV irradiation it interacts with the COP9 signalosome and preferentially with the hyperphosphorylated form of RNA polymerase II. Component of the DCX(DET1-COP1) complex with the substrate recognition component DET1 and COP1. Component of the DCX(DDB2) complex with the substrate recognition component DDB2. Component of the DCX(DTL) complex with the putative substrate recognition component DTL. Component of DCX complexes part of the DesCEND (destruction via C-end degrons) pathway, which contain either TRPC4AP or DCAF12 as substrate-recognition component. Component of the DCX(AMBRA1) complex with the substrate recognition component AMBRA1. Interacts with DDB1, RBX1, RNF7, CDT1, TIP120A/CAND1, SKP2, CDKN1B, MDM2, TP53 and HOXA9. Interacts with DDB2; the interactions with DDB2 and CAND1 are mutually exclusive. Interacts with DCAF1, DTL, DDA1, DCAF6, DCAF4, DCAF16, DCAF17, DET1, WDTC1, DCAF5, DCAF11, WDR24A, COP1, PAFAH1B1, ERCC8, GRWD1, FBXW5, RBBP7, GNB2, WSB1, WSB2, NUP43, PWP1, FBXW8, ATG16L1, KATNB1, RBBP4, RBBP5, LRWD1 and DCAF8. May interact with WDR26, WDR51B, SNRNP40, WDR61, WDR76, WDR5. Interacts (when neddylated) with ARIH1; leading to activate the E3 ligase activity of ARIH1. The DDB1-CUL4A complex interacts with CRY1. Interacts (unneddylated form) with DCUN1D1, DCUN1D2, DCUN1D3, DCUN1D4 and DCUN1D5; these interactions promote the cullin neddylation. As to quaternary structure, (Microbial infection) Interacts with murine cytomegalovirus M48. Neddylated; required for activity of cullin-RING-based E3 ubiquitin-protein ligase complexes. Deneddylated via its interaction with the COP9 signalosome (CSN) complex. Post-translationally, (Microbial infection) Deneddylated by murine cytomegalovirus M48 leading to a S-phase-like environment that is required for efficient replication of the viral genome. In terms of tissue distribution, expressed in oocytes (at protein level). In the ovary, also expressed in cumulus cells. Expressed in testis, spleen and kidney.

It functions in the pathway protein modification; protein ubiquitination. Its function is as follows. Core component of multiple cullin-RING-based E3 ubiquitin-protein ligase complexes which mediate the ubiquitination of target proteins. As a scaffold protein may contribute to catalysis through positioning of the substrate and the ubiquitin-conjugating enzyme. The E3 ubiquitin-protein ligase activity of the complex is dependent on the neddylation of the cullin subunit and is inhibited by the association of the deneddylated cullin subunit with TIP120A/CAND1. The functional specificity of the E3 ubiquitin-protein ligase complex depends on the variable substrate recognition component. DCX(DET1-COP1) directs ubiquitination of JUN. DCX(DDB2) directs ubiquitination of XPC. DCX(DDB2) ubiquitinates histones H3-H4 and is required for efficient histone deposition during replication-coupled (H3.1) and replication-independent (H3.3) nucleosome assembly, probably by facilitating the transfer of H3 from ASF1A/ASF1B to other chaperones involved in histone deposition. DCX(DTL) plays a role in PCNA-dependent polyubiquitination of CDT1 and MDM2-dependent ubiquitination of p53/TP53 in response to radiation-induced DNA damage and during DNA replication. DCX(DTL) directs autoubiquitination of DTL. In association with DDB1 and SKP2 probably is involved in ubiquitination of CDKN1B/p27kip. Is involved in ubiquitination of HOXA9. The DDB1-CUL4A-DTL E3 ligase complex regulates the circadian clock function by mediating the ubiquitination and degradation of CRY1. The DCX(ERCC8) complex (also named CSA complex) plays a role in transcription-coupled repair (TCR). A number of DCX complexes (containing either TRPC4AP or DCAF12 as substrate-recognition component) are part of the DesCEND (destruction via C-end degrons) pathway, which recognizes a C-degron located at the extreme C terminus of target proteins, leading to their ubiquitination and degradation. With CUL4B, contributes to ribosome biogenesis. The DCX(AMBRA1) complex is a master regulator of the transition from G1 to S cell phase by mediating ubiquitination of phosphorylated cyclin-D (CCND1, CCND2 and CCND3). The DCX(AMBRA1) complex also acts as a regulator of Cul5-RING (CRL5) E3 ubiquitin-protein ligase complexes by mediating ubiquitination and degradation of Elongin-C (ELOC) component of CRL5 complexes. The polypeptide is Cullin-4A (Mus musculus (Mouse)).